The following is a 550-amino-acid chain: MDTKRLIVFIVLSFGLLFVWQEYFAPKPQPKPVAAAVQPDGTPAPATARPADSPATGKLTSAQTITVTTDLVKAQINTAGGDIRSLELLTQGAIDNPDKPFMLMTEQGGRTYVAQSGLLSSDASLPTHKTLYAADKTAYTLLPDQNTLTVTLAAAPVNGVEVKKIFTFKRDSYVIDVRYDIINHSDKPVDATAYYRLLRDGKAPEGESSMAHTFTGPAVYTETGKFQKVSFEDLAKGKGDYVRQADNGWVAMVQHYFVSAWILKTNDGKSVCSSAEACQFELKPAAGDLYSAGVLVKLPVVAAGQQYSIDMPLYAGPEDTRRMATVAPGLVLTKDYGWVTIIATPLFWLLDKLYGLVHNWGWAIVLLTVLVKAAFYPLSAASYRSMAKMKALAPRMQRLKEQYGDDRQKFQQATMEMYKTEKVNPLGGCLPIVVQIPVFIGLYWALLASVELRQAPWILWIHDLAKPDPYYILPALMAATMYLQTFLNPPPADPLQAKMMKIMPLAFSVMFFFFPAGLVLYWLVNNILSIAQQWWVNKQIEKDAAKAKSS.

The helical transmembrane segment at 6–26 (LIVFIVLSFGLLFVWQEYFAP) threads the bilayer. The tract at residues 30–59 (PKPVAAAVQPDGTPAPATARPADSPATGKL) is disordered. 4 consecutive transmembrane segments (helical) span residues 360-380 (WGWA…PLSA), 430-450 (LPIV…LASV), 472-492 (ILPA…PPPA), and 504-524 (PLAF…YWLV).

Belongs to the OXA1/ALB3/YidC family. Type 1 subfamily. In terms of assembly, interacts with the Sec translocase complex via SecD. Specifically interacts with transmembrane segments of nascent integral membrane proteins during membrane integration.

The protein resides in the cell inner membrane. Its function is as follows. Required for the insertion and/or proper folding and/or complex formation of integral membrane proteins into the membrane. Involved in integration of membrane proteins that insert both dependently and independently of the Sec translocase complex, as well as at least some lipoproteins. Aids folding of multispanning membrane proteins. The polypeptide is Membrane protein insertase YidC (Laribacter hongkongensis (strain HLHK9)).